Consider the following 58-residue polypeptide: Large ribosomal subunit protein uL30 (58 aa).

The protein belongs to the universal ribosomal protein uL30 family. In terms of assembly, part of the 50S ribosomal subunit.

This chain is Large ribosomal subunit protein uL30, found in Vibrio campbellii (strain ATCC BAA-1116).